Here is a 388-residue protein sequence, read N- to C-terminus: Carbamoyl phosphate synthase small chain (388 aa).

Residues 1-192 form a CPSase region; sequence MPLSDAMPAL…FNPDGTVKNG (192 aa). L-glutamine contacts are provided by serine 51, glycine 244, and glycine 246. The 187-residue stretch at 196 to 382 folds into the Glutamine amidotransferase type-1 domain; it reads TVVALDFGVK…VHQMRTTKQA (187 aa). The active-site Nucleophile is the cysteine 272. Residues methionine 273, glutamine 276, asparagine 312, and phenylalanine 315 each contribute to the L-glutamine site. Active-site residues include histidine 355 and glutamate 357.

This sequence belongs to the CarA family. Composed of two chains; the small (or glutamine) chain promotes the hydrolysis of glutamine to ammonia, which is used by the large (or ammonia) chain to synthesize carbamoyl phosphate. Tetramer of heterodimers (alpha,beta)4.

The catalysed reaction is hydrogencarbonate + L-glutamine + 2 ATP + H2O = carbamoyl phosphate + L-glutamate + 2 ADP + phosphate + 2 H(+). The enzyme catalyses L-glutamine + H2O = L-glutamate + NH4(+). It participates in amino-acid biosynthesis; L-arginine biosynthesis; carbamoyl phosphate from bicarbonate: step 1/1. Its pathway is pyrimidine metabolism; UMP biosynthesis via de novo pathway; (S)-dihydroorotate from bicarbonate: step 1/3. Its function is as follows. Small subunit of the glutamine-dependent carbamoyl phosphate synthetase (CPSase). CPSase catalyzes the formation of carbamoyl phosphate from the ammonia moiety of glutamine, carbonate, and phosphate donated by ATP, constituting the first step of 2 biosynthetic pathways, one leading to arginine and/or urea and the other to pyrimidine nucleotides. The small subunit (glutamine amidotransferase) binds and cleaves glutamine to supply the large subunit with the substrate ammonia. This chain is Carbamoyl phosphate synthase small chain, found in Nostoc sp. (strain PCC 7120 / SAG 25.82 / UTEX 2576).